The following is a 292-amino-acid chain: MQELIKRTLPQDDALNQAIVNELRSQNWAGFLNYSQVQQLCHNFELTPLKLAMHLLPLAASYSHTAISHFNVGAIAIGEQGDFYFGANQEFANSAIQQTIHAEQSAISHAWLRNERRISDMVVNYTPCGHCRQFMNELHGAEKISIHLPHSQNNPLHSYLPDAFGPKDLDIAAHLLAEENHDLVADHQDDLVNQAILAANQSHCPYSNSPHGIAILFKNGDVVTGRYAENAAFNPSLPALQTALNFAYLNDKKLSDIERIVMAEKALKLSHKTMAETLLSTLTSVELEYYSL.

CMP/dCMP-type deaminase domains are found at residues 47–167 and 186–292; these read TPLK…FGPK and DHQD…YYSL. A substrate-binding site is contributed by 88–90; it reads NQE. Zn(2+) is bound at residue His-101. The active-site Proton donor is the Glu-103. Zn(2+)-binding residues include Cys-128 and Cys-131.

Belongs to the cytidine and deoxycytidylate deaminase family. As to quaternary structure, homodimer. Zn(2+) is required as a cofactor.

It catalyses the reaction cytidine + H2O + H(+) = uridine + NH4(+). The catalysed reaction is 2'-deoxycytidine + H2O + H(+) = 2'-deoxyuridine + NH4(+). Functionally, this enzyme scavenges exogenous and endogenous cytidine and 2'-deoxycytidine for UMP synthesis. This Haemophilus influenzae (strain 86-028NP) protein is Cytidine deaminase.